Reading from the N-terminus, the 633-residue chain is Pesticidal crystal protein Cry2Aa (633 aa).

The protein belongs to the delta endotoxin family.

In terms of biological role, promotes colloidosmotic lysis by binding to the midgut epithelial cells of both dipteran (Aedes aegypti) and lepidopteran (Manduca sexta) larvae. The chain is Pesticidal crystal protein Cry2Aa (cry2Aa) from Bacillus thuringiensis subsp. kurstaki.